Here is a 692-residue protein sequence, read N- to C-terminus: Sulfhydryl oxidase 2 (692 aa).

Positions 1–38 (MAAARAVARDPGAYARQPPSLRAARLPRLLFLLAVVAA) are cleaved as a signal peptide. In terms of domain architecture, Thioredoxin spans 54–172 (SDAVWLLDSG…RQTMIDFLQN (119 aa)). An N-linked (GlcNAc...) asparagine glycan is attached at Asn71. Active-site nucleophile residues include Cys85 and Cys88. Disulfide bonds link Cys85/Cys88 and Cys116/Cys125. 3 N-linked (GlcNAc...) asparagine glycosylation sites follow: Asn172, Asn212, and Asn260. A disulfide bond links Cys412 and Cys424. The region spanning 415–524 (SRLELRGYPC…EDPKFPKVPW (110 aa)) is the ERV/ALR sulfhydryl oxidase domain. FAD is bound by residues Arg420, Trp427, His431, Glu472, His476, 499 to 506 (WRKHNMVN), Lys521, and Trp524. An intrachain disulfide couples Cys470 to Cys473. Cys530 and Cys533 are oxidised to a cystine. The segment at 568 to 607 (DQGSPGEWEAQGREQEEGKGLNPSGKSWRHHDTGSLRPPH) is disordered. The span at 577–586 (AQGREQEEGK) shows a compositional bias: basic and acidic residues. The chain crosses the membrane as a helical span at residues 656 to 676 (SLCVVLYVASSLFLMIMYFFF).

It belongs to the quiescin-sulfhydryl oxidase (QSOX) family. FAD is required as a cofactor.

Its subcellular location is the membrane. The catalysed reaction is 2 R'C(R)SH + O2 = R'C(R)S-S(R)CR' + H2O2. Catalyzes the oxidation of sulfhydryl groups in peptide and protein thiols to disulfides with the reduction of oxygen to hydrogen peroxide. May contribute to disulfide bond formation in a variety of secreted proteins. This Mus musculus (Mouse) protein is Sulfhydryl oxidase 2 (Qsox2).